Here is a 982-residue protein sequence, read N- to C-terminus: MAELEHLGGKRAESARMRRAEQLRRWRGSLTEQEPAERRGAGRQPLTRRGSPRVRFEDGAVFLAACSSGDTDEVRKLLARGADINTVNVDGLTALHQACIDENLDMVKFLVENRANVNQQDNEGWTPLHAAASCGYLNIAEYFINHGASVGIVNSEGEVPSDLAEEPAMKDLLLEQVKKQGVDLEQSRKEEEQQMLQDARQWLNSGKIEDVRQARSGATALHVAAAKGYSEVLRLLIQAGYELNVQDYDGWTPLHAAAHWGVKEACSILAEALCDMDIRNKLGQTPFDVADEGLVEHLELLQKKQNVLRSEKETRNKLIESDLNSKIQSGFFKNKEKMLYEEETPKSQEMEEENKESSSSSSEEEEGEDEASESETEKEADKKPEAFVNHSNSESKSSITEQIPAPAQNTFSASSARRFSSGLFNKPEEPKDESPSSWRLGLRKTGSHNMLSEVANSREPIRDRGSSIYRSSSSPRISALLDNKDKERENKSYISSLAPRKLNSTSDIEEKENRESAVNLVRSGSYTRQLWRDEAKGNEIPQTIAPSTYVSTYLKRTPHKSQADTTAEKTADNVSSSTPLCVITNRPLPSTANGVTATPVLSITGTDSSVEAREKRRSYLTPVRDEEAESLRKARSRQARQTRRSTQGVTLTDLQEAERTFSRSRAERQAQEQPREKPTDTEGLEGSPEKHEPSAVPATEAGEGQQPWGRSLDEEPICHRLRCPAQPDKPTTPASPSTSRPSLYTSSHLLWTNRFSVPDSESSETTTNTTTAKEMDKNENEEADLDEQSSKRLSIRERRRPKERRRGTGINFWTKDEDETDGSEEVKETWHERLSRLESGGSNPTTSDSYGDRASARARREAREARLATLTSRVEEDSNRDYKKLYESALTENQKLKTKLQEAQLELADIKSKLEKVAQQKQEKTSDRSSVLEMEKRERRALERKMSEMEEEMKVLTELKSDNQRLKDENGALIRVISKLSK.

Residues Met-1–Arg-24 are compositionally biased toward basic and acidic residues. Residues Met-1 to Gly-50 are disordered. Ser-29 is subject to Phosphoserine. ANK repeat units lie at residues Glu-57–Thr-86, Asp-90–Gln-119, Glu-123–Ile-152, Ser-216–Val-245, and Asp-249–Ile-278. Disordered regions lie at residues Glu-342 to Ala-517, Arg-556 to Pro-579, Thr-606 to Glu-864, and Ala-918 to Glu-948. Residues Ser-362 to Ser-374 show a composition bias toward acidic residues. Basic and acidic residues predominate over residues Glu-375–Glu-385. Over residues Asn-389 to Glu-401 the composition is skewed to polar residues. Residues Phe-411 to Ser-421 show a composition bias toward low complexity. Phosphothreonine is present on Thr-445. Low complexity predominate over residues Ser-466 to Ser-478. Residues Asp-482–Lys-491 show a composition bias toward basic and acidic residues. Over residues Val-623–Arg-632 the composition is skewed to basic and acidic residues. The span at Lys-633 to Arg-643 shows a compositional bias: basic residues. Position 646 is a phosphothreonine (Thr-646). Over residues Glu-656–Asp-680 the composition is skewed to basic and acidic residues. Low complexity predominate over residues Thr-731 to Ser-742. The segment covering Leu-743–Phe-755 has biased composition (polar residues). Residues Glu-797 to Gly-807 are compositionally biased toward basic residues. A Phosphothreonine modification is found at Thr-808. Over residues Glu-824–Arg-836 the composition is skewed to basic and acidic residues. Ser-839 carries the phosphoserine modification. Positions Gly-840–Ser-849 are enriched in polar residues. Composition is skewed to basic and acidic residues over residues Tyr-850 to Glu-864, Ala-918 to Asp-927, and Glu-933 to Glu-948. Residue Ser-947 is modified to Phosphoserine.

PP1 comprises a catalytic subunit, PPP1CA, PPP1CB or PPP1CC, and one or several targeting or regulatory subunits. PPP1R12B mediates binding to myosin. Isoform 3 and isoform 4 bind PPP1R12A, but not isoform 1 of PPP1R12B itself. Binds IL16. Detected in skeletal muscle, fetal and adult heart, brain, placenta, kidney, spleen, thymus, pancreas and lung. Isoform 3 and isoform 4 are heart specific.

Its subcellular location is the cytoplasm. The protein resides in the cytoskeleton. It localises to the stress fiber. Regulates myosin phosphatase activity. Augments Ca(2+) sensitivity of the contractile apparatus. The protein is Protein phosphatase 1 regulatory subunit 12B (PPP1R12B) of Homo sapiens (Human).